A 113-amino-acid polypeptide reads, in one-letter code: Hydrogenase maturation factor HypA (113 aa).

Histidine 2 provides a ligand contact to Ni(2+). 4 residues coordinate Zn(2+): cysteine 73, cysteine 76, cysteine 89, and cysteine 92.

This sequence belongs to the HypA/HybF family.

Its function is as follows. Involved in the maturation of [NiFe] hydrogenases. Required for nickel insertion into the metal center of the hydrogenase. This Albidiferax ferrireducens (strain ATCC BAA-621 / DSM 15236 / T118) (Rhodoferax ferrireducens) protein is Hydrogenase maturation factor HypA.